Consider the following 292-residue polypeptide: Ribosomal RNA small subunit methyltransferase I (292 aa).

Belongs to the methyltransferase superfamily. RsmI family.

The protein resides in the cytoplasm. It catalyses the reaction cytidine(1402) in 16S rRNA + S-adenosyl-L-methionine = 2'-O-methylcytidine(1402) in 16S rRNA + S-adenosyl-L-homocysteine + H(+). Catalyzes the 2'-O-methylation of the ribose of cytidine 1402 (C1402) in 16S rRNA. This is Ribosomal RNA small subunit methyltransferase I from Bacillus subtilis (strain 168).